The chain runs to 259 residues: Sesquipedalian-2 (259 aa).

Residues 17–121 (PADHMGFLRT…WVKVLSRASF (105 aa)) enclose the PH domain. Residues 124–149 (MRLVVRELESQLQDARQSLALQRRSS) are a coiled coil. A F&amp;H motif is present at residues 223 to 235 (CFSTLHDWYGQEI).

The protein belongs to the sesquipedalian family. As to quaternary structure, forms homodimers and heterodimers with PHETA1. Interacts with OCRL and INPP5B.

Its subcellular location is the early endosome. It is found in the recycling endosome. It localises to the golgi apparatus. The protein localises to the trans-Golgi network. The protein resides in the cytoplasmic vesicle. Its subcellular location is the clathrin-coated vesicle. Functionally, plays a role in endocytic trafficking. Required for receptor recycling from endosomes, both to the trans-Golgi network and the plasma membrane. The chain is Sesquipedalian-2 from Homo sapiens (Human).